A 422-amino-acid chain; its full sequence is F-box/kelch-repeat protein At3g27150 (422 aa).

Residues 68–114 form the F-box domain; it reads LLNVPQLVYELEVEILARVPRFEYWKLKLLNKGFSRLLKSDEIFKVR. 5 Kelch repeats span residues 162–212, 213–264, 266–312, 314–361, and 366–412; these read ESLC…TCGT, VVFV…YLRG, FYVL…SPPL, AVVG…VAFK, and KLLV…RFNH.

In Arabidopsis thaliana (Mouse-ear cress), this protein is F-box/kelch-repeat protein At3g27150.